Reading from the N-terminus, the 369-residue chain is Type 2 DNA topoisomerase 6 subunit A (369 aa).

The Topo IIA-type catalytic domain maps to 10–146; that stretch reads KPREIAKQKI…LGFIPEEDGS (137 aa). Tyrosine 103 functions as the O-(5'-phospho-DNA)-tyrosine intermediate in the catalytic mechanism. Residues glutamate 197 and aspartate 249 each coordinate Mg(2+).

The protein belongs to the TOP6A family. Homodimer. Heterotetramer of two Top6A and two Top6B chains. It depends on Mg(2+) as a cofactor.

It carries out the reaction ATP-dependent breakage, passage and rejoining of double-stranded DNA.. Functionally, relaxes both positive and negative superturns and exhibits a strong decatenase activity. In Methanocaldococcus jannaschii (strain ATCC 43067 / DSM 2661 / JAL-1 / JCM 10045 / NBRC 100440) (Methanococcus jannaschii), this protein is Type 2 DNA topoisomerase 6 subunit A.